The primary structure comprises 730 residues: MMRHDRNVTEIDAETRPDENLWHSGDSAVGAPPAATPAAMTDLPEDRYLNRELSWLDFNARVLALADDNSLPLLERAKFLAIFASNLDEFYMVRVAGLKRRDEMGLSVRSADGLTPRKQLALIGEHTQRIATRHARVFLDSVRPALAEEGIHIVTWADLDQAERDELSTYFTEQVFPVLTPLAVDPAHPFPFVSGLSLNLAVMVRQTEDGGQHFARVKVPNNVDRFVELAAPRAGAEGENRGVVRFLPMEELIAAFLPLLFPGMEIVEHHAFRITRNADMEVEEDRDEDLLQALERELARRRFGPPVRLEIADDMTEGMLELLLRELDVHPGDVIEVPGLLDLSSLRQIYDLDRPALKDPAFVPDTHPAFADRESPKSIFATLREGDVLVHHPYDSFSTSVQRFIQQAAADPNVLAIKQTLYRTSGDSPIVRALIEAAEAGKQAVALVEIKARFDEQANIRWARALEQAGVHVVYGLVGLKTHCKTCLVVRREGSAIRRYCHIGTGNYNSKTARLYEDVGLLTAAPDIGADLTDLFNSLTGYSRKVSYRNLLVAPHGIRTGIIERVEREIAAHRERGQGRIRLKMNALVDEQVIDSLYRASQAGVRVEVVVRGICALRPGVQGYSENIFVRSILGRFLEHSRIIHFRNINEFWIGSADMMHRNLDRRVEVLAQVKDPKLTAQLDELFESALDPSTRCWELGPDGQWTPSPQEGHTVRDHQVSLMERHRSP.

The segment covering 1-21 (MMRHDRNVTEIDAETRPDENL) has biased composition (basic and acidic residues). A disordered region spans residues 1 to 39 (MMRHDRNVTEIDAETRPDENLWHSGDSAVGAPPAATPAA). Asparagine 86 contacts ATP. Mg(2+) is bound by residues arginine 423 and arginine 453. The active-site Phosphohistidine intermediate is the histidine 483. Residues tyrosine 516, arginine 612, and histidine 640 each contribute to the ATP site.

This sequence belongs to the polyphosphate kinase 1 (PPK1) family. Requires Mg(2+) as cofactor. Post-translationally, an intermediate of this reaction is the autophosphorylated ppk in which a phosphate is covalently linked to a histidine residue through a N-P bond.

It catalyses the reaction [phosphate](n) + ATP = [phosphate](n+1) + ADP. Its function is as follows. Catalyzes the reversible transfer of the terminal phosphate of ATP to form a long-chain polyphosphate (polyP). This chain is Polyphosphate kinase, found in Mycobacterium avium (strain 104).